Consider the following 385-residue polypeptide: Calcium/calmodulin-dependent protein kinase type 1D (385 aa).

The Protein kinase domain occupies Phe-23 to Ile-279. ATP contacts are provided by residues Leu-29–Val-37 and Lys-52. Lys-113 participates in a covalent cross-link: Glycyl lysine isopeptide (Lys-Gly) (interchain with G-Cter in SUMO2). Ser-122 carries the post-translational modification Phosphoserine. Asp-144 functions as the Proton acceptor in the catalytic mechanism. Thr-180 bears the Phosphothreonine; by CaMKK1 and CaMKK2 mark. Positions Ile-279 to Met-319 are autoinhibitory domain. A calmodulin-binding region spans residues Lys-299–Arg-320. The short motif at His-318–Leu-324 is the Nuclear export signal element. The segment at Ser-360–Lys-385 is disordered. Positions Thr-375–Lys-385 are enriched in polar residues.

It belongs to the protein kinase superfamily. CAMK Ser/Thr protein kinase family. CaMK subfamily. As to expression, widely expressed. Highly and mostly expressed in polymorphonuclear leukocytes (neutrophilic and eosinophilic granulocytes) while little or no expression is observed in monocytes and lymphocytes.

The protein resides in the cytoplasm. It is found in the nucleus. It catalyses the reaction L-seryl-[protein] + ATP = O-phospho-L-seryl-[protein] + ADP + H(+). The catalysed reaction is L-threonyl-[protein] + ATP = O-phospho-L-threonyl-[protein] + ADP + H(+). Its activity is regulated as follows. Activated by Ca(2+)/calmodulin. Binding of calmodulin results in conformational change that relieves intrasteric autoinhibition and allows phosphorylation of Thr-180 within the activation loop by CaMKK1 or CaMKK2. Phosphorylation of Thr-180 results in several fold increase in total activity. Unlike CaMK4, may be unable to exhibit autonomous activity after Ca(2+)/calmodulin activation. Functionally, calcium/calmodulin-dependent protein kinase that operates in the calcium-triggered CaMKK-CaMK1 signaling cascade and, upon calcium influx, activates CREB-dependent gene transcription, regulates calcium-mediated granulocyte function and respiratory burst and promotes basal dendritic growth of hippocampal neurons. In neutrophil cells, required for cytokine-induced proliferative responses and activation of the respiratory burst. Activates the transcription factor CREB1 in hippocampal neuron nuclei. May play a role in apoptosis of erythroleukemia cells. In vitro, phosphorylates transcription factor CREM isoform Beta. In Homo sapiens (Human), this protein is Calcium/calmodulin-dependent protein kinase type 1D (CAMK1D).